A 29-amino-acid chain; its full sequence is Small toxic protein ZorP (29 aa).

The chain crosses the membrane as a helical span at residues 10–27 (VLIAVLELLVALLRLIDL).

It is found in the membrane. Its function is as follows. Toxic component of a type I toxin-antitoxin (TA) system. Overexpression leads to cell stasis and a decrease in colony-forming units. Probably repressed by cognate small RNA orzP. Base pairing occurs between 18 bases in the 5' UTR of zorP mRNA and the 5' end of OrzP sRNA. In Escherichia coli O157:H7, this protein is Small toxic protein ZorP.